The sequence spans 319 residues: ATP-dependent 6-phosphofructokinase (319 aa).

Gly-11 serves as a coordination point for ATP. Residue 21-25 coordinates ADP; it reads RAVVR. ATP-binding positions include 72 to 73 and 102 to 105; these read RC and GDGS. Residue Asp-103 participates in Mg(2+) binding. 125–127 contributes to the substrate binding site; the sequence is TID. Asp-127 acts as the Proton acceptor in catalysis. ADP is bound at residue Arg-154. Residues Arg-162 and 169-171 each bind substrate; that span reads MGR. Residues 185-187, Arg-211, and 213-215 each bind ADP; these read GAE and KLH. Substrate-binding positions include Glu-222, Arg-243, and 249 to 252; that span reads HLQR.

It belongs to the phosphofructokinase type A (PFKA) family. ATP-dependent PFK group I subfamily. Prokaryotic clade 'B1' sub-subfamily. Homotetramer. Mg(2+) serves as cofactor.

It localises to the cytoplasm. It catalyses the reaction beta-D-fructose 6-phosphate + ATP = beta-D-fructose 1,6-bisphosphate + ADP + H(+). Its pathway is carbohydrate degradation; glycolysis; D-glyceraldehyde 3-phosphate and glycerone phosphate from D-glucose: step 3/4. Allosterically activated by ADP and other diphosphonucleosides, and allosterically inhibited by phosphoenolpyruvate. Catalyzes the phosphorylation of D-fructose 6-phosphate to fructose 1,6-bisphosphate by ATP, the first committing step of glycolysis. The protein is ATP-dependent 6-phosphofructokinase of Clostridium novyi (strain NT).